The following is a 189-amino-acid chain: Photosystem I assembly protein Ycf4 (189 aa).

Transmembrane regions (helical) follow at residues 25-45 (SVYF…LAGL) and 62-82 (LVFI…SLAG).

Belongs to the Ycf4 family.

The protein resides in the cellular thylakoid membrane. Its function is as follows. Seems to be required for the assembly of the photosystem I complex. The polypeptide is Photosystem I assembly protein Ycf4 (Synechococcus sp. (strain JA-3-3Ab) (Cyanobacteria bacterium Yellowstone A-Prime)).